Reading from the N-terminus, the 347-residue chain is Phosphoribosylformylglycinamidine cyclo-ligase (347 aa).

This sequence belongs to the AIR synthase family.

The protein localises to the cytoplasm. It catalyses the reaction 2-formamido-N(1)-(5-O-phospho-beta-D-ribosyl)acetamidine + ATP = 5-amino-1-(5-phospho-beta-D-ribosyl)imidazole + ADP + phosphate + H(+). The protein operates within purine metabolism; IMP biosynthesis via de novo pathway; 5-amino-1-(5-phospho-D-ribosyl)imidazole from N(2)-formyl-N(1)-(5-phospho-D-ribosyl)glycinamide: step 2/2. In Yersinia pestis, this protein is Phosphoribosylformylglycinamidine cyclo-ligase.